A 233-amino-acid chain; its full sequence is Probable GTP-binding protein EngB (233 aa).

The 175-residue stretch at 31–205 folds into the EngB-type G domain; sequence TGVEIAFAGR…RRKLDTWFGP (175 aa). GTP-binding positions include 39 to 46, 66 to 70, 84 to 87, 151 to 154, and 184 to 186; these read GRSNAGKS, GRTQL, DLPG, TKAD, and FSS. Residues Ser46 and Thr68 each contribute to the Mg(2+) site.

The protein belongs to the TRAFAC class TrmE-Era-EngA-EngB-Septin-like GTPase superfamily. EngB GTPase family. The cofactor is Mg(2+).

Its function is as follows. Necessary for normal cell division and for the maintenance of normal septation. This is Probable GTP-binding protein EngB from Photobacterium profundum (strain SS9).